The primary structure comprises 142 residues: Small ribosomal subunit protein uS12 (142 aa).

It belongs to the universal ribosomal protein uS12 family. In terms of assembly, part of the 30S ribosomal subunit.

Its function is as follows. With S4 and S5 plays an important role in translational accuracy. Located at the interface of the 30S and 50S subunits. The protein is Small ribosomal subunit protein uS12 of Methanocorpusculum labreanum (strain ATCC 43576 / DSM 4855 / Z).